The primary structure comprises 309 residues: Dihydroorotate dehydrogenase B (NAD(+)), catalytic subunit (309 aa).

FMN-binding positions include Ser21 and 45–46 (KA). Residues Lys45 and 69–73 (NAIGL) each bind substrate. FMN contacts are provided by Asn99 and Asn127. Residue Asn127 coordinates substrate. The Nucleophile role is filled by Cys130. FMN contacts are provided by Lys165 and Ile191. Substrate is bound at residue 192–193 (NT). Residues Gly217, 243-244 (GG), and 265-266 (GT) each bind FMN.

It belongs to the dihydroorotate dehydrogenase family. Type 1 subfamily. As to quaternary structure, heterotetramer of 2 PyrK and 2 PyrD type B subunits. It depends on FMN as a cofactor.

It localises to the cytoplasm. The catalysed reaction is (S)-dihydroorotate + NAD(+) = orotate + NADH + H(+). It functions in the pathway pyrimidine metabolism; UMP biosynthesis via de novo pathway; orotate from (S)-dihydroorotate (NAD(+) route): step 1/1. Catalyzes the conversion of dihydroorotate to orotate with NAD(+) as electron acceptor. The chain is Dihydroorotate dehydrogenase B (NAD(+)), catalytic subunit (pyrD) from Bacillus cereus (strain AH187).